Reading from the N-terminus, the 373-residue chain is tRNA-specific 2-thiouridylase MnmA (373 aa).

Residues 12–19 (GMSGGVDS) and Met-38 each bind ATP. Residues 98–100 (NPD) are interaction with target base in tRNA. Catalysis depends on Cys-103, which acts as the Nucleophile. A disulfide bond links Cys-103 and Cys-200. Gly-127 serves as a coordination point for ATP. An interaction with tRNA region spans residues 150 to 152 (KDQ). The active-site Cysteine persulfide intermediate is Cys-200. Positions 312-313 (RY) are interaction with tRNA.

This sequence belongs to the MnmA/TRMU family.

The protein resides in the cytoplasm. The enzyme catalyses S-sulfanyl-L-cysteinyl-[protein] + uridine(34) in tRNA + AH2 + ATP = 2-thiouridine(34) in tRNA + L-cysteinyl-[protein] + A + AMP + diphosphate + H(+). Catalyzes the 2-thiolation of uridine at the wobble position (U34) of tRNA, leading to the formation of s(2)U34. The sequence is that of tRNA-specific 2-thiouridylase MnmA from Streptococcus pyogenes serotype M2 (strain MGAS10270).